Reading from the N-terminus, the 189-residue chain is Peptidyl-tRNA hydrolase (189 aa).

Tyrosine 16 provides a ligand contact to tRNA. Catalysis depends on histidine 21, which acts as the Proton acceptor. TRNA contacts are provided by phenylalanine 67, asparagine 69, and asparagine 115.

It belongs to the PTH family. Monomer.

It localises to the cytoplasm. It catalyses the reaction an N-acyl-L-alpha-aminoacyl-tRNA + H2O = an N-acyl-L-amino acid + a tRNA + H(+). In terms of biological role, hydrolyzes ribosome-free peptidyl-tRNAs (with 1 or more amino acids incorporated), which drop off the ribosome during protein synthesis, or as a result of ribosome stalling. Its function is as follows. Catalyzes the release of premature peptidyl moieties from peptidyl-tRNA molecules trapped in stalled 50S ribosomal subunits, and thus maintains levels of free tRNAs and 50S ribosomes. The protein is Peptidyl-tRNA hydrolase of Legionella pneumophila subsp. pneumophila (strain Philadelphia 1 / ATCC 33152 / DSM 7513).